Reading from the N-terminus, the 108-residue chain is Tetrahydromethanopterin S-methyltransferase subunit B (108 aa).

Residues 77–99 form a helical membrane-spanning segment; sequence FQGMFFGFWVTMAVLVLVTILAV.

It belongs to the MtrB family. The complex is composed of 8 subunits; MtrA, MtrB, MtrC, MtrD, MtrE, MtrF, MtrG and MtrH.

It is found in the cell membrane. It catalyses the reaction 5-methyl-5,6,7,8-tetrahydromethanopterin + coenzyme M + 2 Na(+)(in) = 5,6,7,8-tetrahydromethanopterin + methyl-coenzyme M + 2 Na(+)(out). It participates in one-carbon metabolism; methanogenesis from CO(2); methyl-coenzyme M from 5,10-methylene-5,6,7,8-tetrahydromethanopterin: step 2/2. Part of a complex that catalyzes the formation of methyl-coenzyme M and tetrahydromethanopterin from coenzyme M and methyl-tetrahydromethanopterin. This is an energy-conserving, sodium-ion translocating step. This Methanococcus maripaludis (strain DSM 14266 / JCM 13030 / NBRC 101832 / S2 / LL) protein is Tetrahydromethanopterin S-methyltransferase subunit B.